Here is a 153-residue protein sequence, read N- to C-terminus: ATP synthase subunit b' (153 aa).

A helical transmembrane segment spans residues 23–40; the sequence is LMAIQVVALTYILNSLFF.

Belongs to the ATPase B chain family. As to quaternary structure, F-type ATPases have 2 components, F(1) - the catalytic core - and F(0) - the membrane proton channel. F(1) has five subunits: alpha(3), beta(3), gamma(1), delta(1), epsilon(1). F(0) has four main subunits: a(1), b(1), b'(1) and c(10-14). The alpha and beta chains form an alternating ring which encloses part of the gamma chain. F(1) is attached to F(0) by a central stalk formed by the gamma and epsilon chains, while a peripheral stalk is formed by the delta, b and b' chains.

Its subcellular location is the cellular thylakoid membrane. F(1)F(0) ATP synthase produces ATP from ADP in the presence of a proton or sodium gradient. F-type ATPases consist of two structural domains, F(1) containing the extramembraneous catalytic core and F(0) containing the membrane proton channel, linked together by a central stalk and a peripheral stalk. During catalysis, ATP synthesis in the catalytic domain of F(1) is coupled via a rotary mechanism of the central stalk subunits to proton translocation. Functionally, component of the F(0) channel, it forms part of the peripheral stalk, linking F(1) to F(0). The b'-subunit is a diverged and duplicated form of b found in plants and photosynthetic bacteria. The sequence is that of ATP synthase subunit b' from Prochlorococcus marinus (strain AS9601).